Reading from the N-terminus, the 139-residue chain is Inactive palmitoleoyl-protein carboxylesterase notum1b (139 aa).

Belongs to the pectinacetylesterase family. Notum subfamily.

Its function is as follows. Probable inactive palmitoleoyl-protein carboxylesterase. The sequence is that of Inactive palmitoleoyl-protein carboxylesterase notum1b from Danio rerio (Zebrafish).